A 415-amino-acid chain; its full sequence is U-box domain-containing protein 29 (415 aa).

The 75-residue stretch at 11-85 (TVPSFFKCPI…NIWSDSIGRR (75 aa)) folds into the U-box domain. ARM repeat units follow at residues 221–263 (KSKL…TISK) and 265–307 (KRVR…TLSS).

Binds to SD129 and SD25.

It carries out the reaction S-ubiquitinyl-[E2 ubiquitin-conjugating enzyme]-L-cysteine + [acceptor protein]-L-lysine = [E2 ubiquitin-conjugating enzyme]-L-cysteine + N(6)-ubiquitinyl-[acceptor protein]-L-lysine.. It functions in the pathway protein modification; protein ubiquitination. Functions as an E3 ubiquitin ligase. This is U-box domain-containing protein 29 (PUB29) from Arabidopsis thaliana (Mouse-ear cress).